The chain runs to 613 residues: MAFNSTPPVSPGGEAQQRPPRFPGEDTTPTSQKEIWGWYAYGIAAEVFAVCGVGSFLPLTLEQLAREHGTLLSSHLPCVRFSSPSTAPGNGTTTATFRRDGTDNDQCVVSVLGLQVNTASFAMYTFSLAVLVQALTLISFSALADYENNRKTLLLAFGFIGSMTSMLFIFIAPPVYILASLLVVVGVTCLGSSFVVLNSFLPVLVANDPSIQTAHKEQGEELSPVNSNGEFVRFEDLDEEISRDSDDHFTTGHRPKTKAAGSASPELQLSTRISSKGVGLGYCAAVLVQILSILMLFALSKTSLPKISGTLPLRFVLLLVGIWWFSFTMVSRRWLRDRPGPPLASSKGAARNSRWRIWLRLIGFAWKSLWKTAKVAVKLREVIIFLIAWFLLSDAMATVSGTAILFARTELKMSTTAVGLLSITATLSGMAGAFLWPVVSRRLRLKSNHTIMLCIALFEVIPLYGMLAYIPLFKKWGVVGLQQPWEIFPLGIVHGLVSGGLSSYCRSFFGLLIPPGSEAAFYALYAATDKGSSFIGPAIVGMLIDATGQVRSGFFFIAVLILLPIPLIWMVNAEKGRQDGLAMADILEKSHREHASEYGGPSEEAEGLLARDI.

Positions M1–T30 are disordered. Residues Y41–L61 traverse the membrane as a helical segment. N-linked (GlcNAc...) asparagine glycosylation is present at N90. Helical transmembrane passes span S120–F140, L167–V187, C189–P209, V278–A298, I307–F327, V382–T402, and V418–V438. A glycan (N-linked (GlcNAc...) asparagine) is linked at N448. 4 consecutive transmembrane segments (helical) span residues L453–F473, G477–V497, F508–T528, and G553–A573. Residues R592–I613 form a disordered region.

The protein belongs to the ATG22 family.

Its subcellular location is the vacuole membrane. Functionally, vacuolar effluxer which mediate the efflux of amino acids resulting from autophagic degradation. The release of autophagic amino acids allows the maintenance of protein synthesis and viability during nitrogen starvation. The polypeptide is Autophagy-related protein 22-2 (atg22-2) (Aspergillus fumigatus (strain ATCC MYA-4609 / CBS 101355 / FGSC A1100 / Af293) (Neosartorya fumigata)).